Consider the following 291-residue polypeptide: Bifunctional protein FolD (291 aa).

Residues 167 to 169 (GRS) and Ser192 contribute to the NADP(+) site.

This sequence belongs to the tetrahydrofolate dehydrogenase/cyclohydrolase family. In terms of assembly, homodimer.

The catalysed reaction is (6R)-5,10-methylene-5,6,7,8-tetrahydrofolate + NADP(+) = (6R)-5,10-methenyltetrahydrofolate + NADPH. It catalyses the reaction (6R)-5,10-methenyltetrahydrofolate + H2O = (6R)-10-formyltetrahydrofolate + H(+). It functions in the pathway one-carbon metabolism; tetrahydrofolate interconversion. Functionally, catalyzes the oxidation of 5,10-methylenetetrahydrofolate to 5,10-methenyltetrahydrofolate and then the hydrolysis of 5,10-methenyltetrahydrofolate to 10-formyltetrahydrofolate. The polypeptide is Bifunctional protein FolD (Leptospira biflexa serovar Patoc (strain Patoc 1 / Ames)).